The primary structure comprises 426 residues: Gamma-glutamyl phosphate reductase (426 aa).

The protein belongs to the gamma-glutamyl phosphate reductase family.

It localises to the cytoplasm. The enzyme catalyses L-glutamate 5-semialdehyde + phosphate + NADP(+) = L-glutamyl 5-phosphate + NADPH + H(+). It participates in amino-acid biosynthesis; L-proline biosynthesis; L-glutamate 5-semialdehyde from L-glutamate: step 2/2. In terms of biological role, catalyzes the NADPH-dependent reduction of L-glutamate 5-phosphate into L-glutamate 5-semialdehyde and phosphate. The product spontaneously undergoes cyclization to form 1-pyrroline-5-carboxylate. In Deinococcus geothermalis (strain DSM 11300 / CIP 105573 / AG-3a), this protein is Gamma-glutamyl phosphate reductase.